The sequence spans 146 residues: Large ribosomal subunit protein bL19 (146 aa).

It belongs to the bacterial ribosomal protein bL19 family.

Its function is as follows. This protein is located at the 30S-50S ribosomal subunit interface and may play a role in the structure and function of the aminoacyl-tRNA binding site. The sequence is that of Large ribosomal subunit protein bL19 from Bartonella quintana (strain Toulouse) (Rochalimaea quintana).